The primary structure comprises 488 residues: Protein nucleotidyltransferase YdiU (488 aa).

Gly91, Gly93, Arg94, Lys114, Asp126, Gly127, Arg177, and Arg184 together coordinate ATP. The tract at residues 108–127 (RFDIQLKGSGPTPYSRRGDG) is disordered. The active-site Proton acceptor is the Asp253. Asn254 and Asp263 together coordinate Mg(2+). An ATP-binding site is contributed by Asp263.

It belongs to the SELO family. Mg(2+) serves as cofactor. The cofactor is Mn(2+).

The catalysed reaction is L-seryl-[protein] + ATP = 3-O-(5'-adenylyl)-L-seryl-[protein] + diphosphate. The enzyme catalyses L-threonyl-[protein] + ATP = 3-O-(5'-adenylyl)-L-threonyl-[protein] + diphosphate. It carries out the reaction L-tyrosyl-[protein] + ATP = O-(5'-adenylyl)-L-tyrosyl-[protein] + diphosphate. It catalyses the reaction L-histidyl-[protein] + UTP = N(tele)-(5'-uridylyl)-L-histidyl-[protein] + diphosphate. The catalysed reaction is L-seryl-[protein] + UTP = O-(5'-uridylyl)-L-seryl-[protein] + diphosphate. The enzyme catalyses L-tyrosyl-[protein] + UTP = O-(5'-uridylyl)-L-tyrosyl-[protein] + diphosphate. Functionally, nucleotidyltransferase involved in the post-translational modification of proteins. It can catalyze the addition of adenosine monophosphate (AMP) or uridine monophosphate (UMP) to a protein, resulting in modifications known as AMPylation and UMPylation. In Bacillus cereus (strain AH820), this protein is Protein nucleotidyltransferase YdiU.